The chain runs to 296 residues: Elongation factor Ts (296 aa).

The tract at residues 82-85 (TDFV) is involved in Mg(2+) ion dislocation from EF-Tu.

The protein belongs to the EF-Ts family.

It localises to the cytoplasm. Its function is as follows. Associates with the EF-Tu.GDP complex and induces the exchange of GDP to GTP. It remains bound to the aminoacyl-tRNA.EF-Tu.GTP complex up to the GTP hydrolysis stage on the ribosome. This chain is Elongation factor Ts, found in Coxiella burnetii (strain CbuG_Q212) (Coxiella burnetii (strain Q212)).